The sequence spans 143 residues: Large ribosomal subunit protein uL11 (143 aa).

The protein belongs to the universal ribosomal protein uL11 family. In terms of assembly, part of the ribosomal stalk of the 50S ribosomal subunit. Interacts with L10 and the large rRNA to form the base of the stalk. L10 forms an elongated spine to which L12 dimers bind in a sequential fashion forming a multimeric L10(L12)X complex. In terms of processing, one or more lysine residues are methylated.

In terms of biological role, forms part of the ribosomal stalk which helps the ribosome interact with GTP-bound translation factors. The polypeptide is Large ribosomal subunit protein uL11 (Herminiimonas arsenicoxydans).